The primary structure comprises 284 residues: 4-hydroxybenzoate octaprenyltransferase (284 aa).

The next 9 membrane-spanning stretches (helical) occupy residues 19–39 (IGTL…AKGM), 42–62 (FDVL…GCVI), 93–113 (IVLF…MNPL), 114–134 (TIKL…MKRF), 136–156 (HLPQ…AWAA), 161–181 (LPSI…AYDT), 209–229 (LMVG…GMHY), 235–252 (FYWA…QQHL), and 264–284 (AFLN…ITFW).

Belongs to the UbiA prenyltransferase family. Mg(2+) serves as cofactor.

It localises to the cell inner membrane. It carries out the reaction all-trans-octaprenyl diphosphate + 4-hydroxybenzoate = 4-hydroxy-3-(all-trans-octaprenyl)benzoate + diphosphate. It functions in the pathway cofactor biosynthesis; ubiquinone biosynthesis. Its function is as follows. Catalyzes the prenylation of para-hydroxybenzoate (PHB) with an all-trans polyprenyl group. Mediates the second step in the final reaction sequence of ubiquinone-8 (UQ-8) biosynthesis, which is the condensation of the polyisoprenoid side chain with PHB, generating the first membrane-bound Q intermediate 3-octaprenyl-4-hydroxybenzoate. The chain is 4-hydroxybenzoate octaprenyltransferase from Vibrio atlanticus (strain LGP32) (Vibrio splendidus (strain Mel32)).